Consider the following 154-residue polypeptide: Endoribonuclease YbeY (154 aa).

The Zn(2+) site is built by His-116, His-120, and His-126.

It belongs to the endoribonuclease YbeY family. It depends on Zn(2+) as a cofactor.

It is found in the cytoplasm. Its function is as follows. Single strand-specific metallo-endoribonuclease involved in late-stage 70S ribosome quality control and in maturation of the 3' terminus of the 16S rRNA. The protein is Endoribonuclease YbeY of Buchnera aphidicola subsp. Baizongia pistaciae (strain Bp).